We begin with the raw amino-acid sequence, 474 residues long: Bifunctional protein HldE (474 aa).

The interval 1-318 (MKVTLPDFNK…ENAIRGRADN (318 aa)) is ribokinase. Residue 195-198 (NMSE) participates in ATP binding. The active site involves Asp-264. Residues 344–474 (MTNGCFDILH…TNIINAIKKK (131 aa)) form a cytidylyltransferase region.

It in the N-terminal section; belongs to the carbohydrate kinase PfkB family. In the C-terminal section; belongs to the cytidylyltransferase family. In terms of assembly, homodimer.

The catalysed reaction is D-glycero-beta-D-manno-heptose 7-phosphate + ATP = D-glycero-beta-D-manno-heptose 1,7-bisphosphate + ADP + H(+). It catalyses the reaction D-glycero-beta-D-manno-heptose 1-phosphate + ATP + H(+) = ADP-D-glycero-beta-D-manno-heptose + diphosphate. Its pathway is nucleotide-sugar biosynthesis; ADP-L-glycero-beta-D-manno-heptose biosynthesis; ADP-L-glycero-beta-D-manno-heptose from D-glycero-beta-D-manno-heptose 7-phosphate: step 1/4. The protein operates within nucleotide-sugar biosynthesis; ADP-L-glycero-beta-D-manno-heptose biosynthesis; ADP-L-glycero-beta-D-manno-heptose from D-glycero-beta-D-manno-heptose 7-phosphate: step 3/4. Functionally, catalyzes the phosphorylation of D-glycero-D-manno-heptose 7-phosphate at the C-1 position to selectively form D-glycero-beta-D-manno-heptose-1,7-bisphosphate. Its function is as follows. Catalyzes the ADP transfer from ATP to D-glycero-beta-D-manno-heptose 1-phosphate, yielding ADP-D-glycero-beta-D-manno-heptose. In Proteus mirabilis (strain HI4320), this protein is Bifunctional protein HldE.